The following is a 77-amino-acid chain: uncharacterized protein (77 aa).

This is an uncharacterized protein from Plasmodium falciparum (isolate fcm17 / Senegal).